We begin with the raw amino-acid sequence, 500 residues long: Probable transcription factor FPSE_09189 (500 aa).

Disordered regions lie at residues 161–197 (MVRHLSNHPPSGTVPVGPCSRPEPSRASQRPEPPSLA) and 457–500 (IRTG…TQLE). Residues 459–474 (TGHEDSSRDGGRENKA) are compositionally biased toward basic and acidic residues. Over residues 475-484 (MNRNRSTGNS) the composition is skewed to polar residues.

It localises to the nucleus. Its function is as follows. The two putative transcription factors FPSE_09188 and FPSE_09189 could be responsible for orchestrating expression of the W493 A and B biosynthesis cluster genes. W493 A and B consist of six amino acid residues D-allo-thr, L-Ala, D-Ala, L-Gln, D-Tyr, and L-Val/L-Ile linked to a 3-hydroxy-4-methyltetradecanoic acid polyketide chain. This chain is Probable transcription factor FPSE_09189, found in Fusarium pseudograminearum (strain CS3096) (Wheat and barley crown-rot fungus).